The chain runs to 378 residues: Chorismate synthase (378 aa).

The segment at 37-60 (EEEIQKDLTRRRPGQNDLTTPRDE) is disordered. Arginine 47 contacts NADP(+). Residues 124 to 126 (RSS), glycine 289, 304 to 308 (KPTST), and arginine 330 each bind FMN.

It belongs to the chorismate synthase family. As to quaternary structure, homotetramer. FMNH2 serves as cofactor.

It catalyses the reaction 5-O-(1-carboxyvinyl)-3-phosphoshikimate = chorismate + phosphate. The protein operates within metabolic intermediate biosynthesis; chorismate biosynthesis; chorismate from D-erythrose 4-phosphate and phosphoenolpyruvate: step 7/7. Its function is as follows. Catalyzes the anti-1,4-elimination of the C-3 phosphate and the C-6 proR hydrogen from 5-enolpyruvylshikimate-3-phosphate (EPSP) to yield chorismate, which is the branch point compound that serves as the starting substrate for the three terminal pathways of aromatic amino acid biosynthesis. This reaction introduces a second double bond into the aromatic ring system. This chain is Chorismate synthase, found in Leptospira biflexa serovar Patoc (strain Patoc 1 / Ames).